We begin with the raw amino-acid sequence, 79 residues long: uncharacterized protein (79 aa).

The segment at 1-37 (MQLDVFSRMMFGDAAKPTEEKEEEQQEEVSQVSQTND) is disordered.

This is an uncharacterized protein from Bacillus subtilis (strain 168).